The primary structure comprises 608 residues: Glutamine--fructose-6-phosphate aminotransferase [isomerizing] (608 aa).

The active-site Nucleophile; for GATase activity is Cys2. In terms of domain architecture, Glutamine amidotransferase type-2 spans 2 to 217 (CGIVGIVGNQ…DGDWAVIGKT (216 aa)). SIS domains follow at residues 281–422 (ISDA…ARGT) and 456–598 (LSRE…VDQP). The active-site For Fru-6P isomerization activity is Lys603.

It localises to the cytoplasm. The catalysed reaction is D-fructose 6-phosphate + L-glutamine = D-glucosamine 6-phosphate + L-glutamate. Functionally, involved in the production of the root hair deformation (HAD) factor specifically on medicago. The chain is Glutamine--fructose-6-phosphate aminotransferase [isomerizing] (nodM) from Rhizobium meliloti (strain 1021) (Ensifer meliloti).